The following is a 351-amino-acid chain: DNA polymerase IV (351 aa).

Residues I3–G187 form the UmuC domain. Mg(2+)-binding residues include D7 and D105. Residue E106 is part of the active site.

This sequence belongs to the DNA polymerase type-Y family. Mg(2+) serves as cofactor.

It carries out the reaction DNA(n) + a 2'-deoxyribonucleoside 5'-triphosphate = DNA(n+1) + diphosphate. In terms of biological role, poorly processive, error-prone DNA polymerase involved in untargeted mutagenesis. Copies undamaged DNA at stalled replication forks, which arise in vivo from mismatched or misaligned primer ends. These misaligned primers can be extended by PolIV. Exhibits no 3'-5' exonuclease (proofreading) activity. May be involved in translesional synthesis. The sequence is that of DNA polymerase IV from Sulfurisphaera tokodaii (strain DSM 16993 / JCM 10545 / NBRC 100140 / 7) (Sulfolobus tokodaii).